The chain runs to 186 residues: UPF0340 protein M6_Spy1622 (186 aa).

The protein belongs to the UPF0340 family.

The sequence is that of UPF0340 protein M6_Spy1622 from Streptococcus pyogenes serotype M6 (strain ATCC BAA-946 / MGAS10394).